A 414-amino-acid chain; its full sequence is uncharacterized protein (414 aa).

The protein belongs to the MG032/MG096/MG288 family.

This is an uncharacterized protein from Mycoplasma genitalium (strain ATCC 33530 / DSM 19775 / NCTC 10195 / G37) (Mycoplasmoides genitalium).